The sequence spans 443 residues: Exodeoxyribonuclease 7 large subunit (443 aa).

It belongs to the XseA family. As to quaternary structure, heterooligomer composed of large and small subunits.

The protein resides in the cytoplasm. The enzyme catalyses Exonucleolytic cleavage in either 5'- to 3'- or 3'- to 5'-direction to yield nucleoside 5'-phosphates.. Its function is as follows. Bidirectionally degrades single-stranded DNA into large acid-insoluble oligonucleotides, which are then degraded further into small acid-soluble oligonucleotides. This Vibrio vulnificus (strain CMCP6) protein is Exodeoxyribonuclease 7 large subunit.